Here is a 117-residue protein sequence, read N- to C-terminus: Ig lambda-1 chain V region (117 aa).

The first 20 residues, 1 to 20 (MAWISLILSLLALSSGGAIS), serve as a signal peptide directing secretion. A Pyrrolidone carboxylic acid modification is found at Gln-21. Residues 21–117 (QAVVTQESAL…YFCALWYSNH (97 aa)) enclose the Ig-like domain.

In Mus musculus (Mouse), this protein is Ig lambda-1 chain V region.